A 353-amino-acid chain; its full sequence is Photosystem II D2 protein (353 aa).

Thr2 is modified (N-acetylthreonine). Position 2 is a phosphothreonine (Thr2). The helical transmembrane segment at 41-61 threads the bilayer; it reads CAYFALGGWFTGTTFVTSWYT. His118 contributes to the chlorophyll a binding site. A helical membrane pass occupies residues 125-141; that stretch reads GFMLRQFEIARSVNLRP. Positions 130 and 143 each coordinate pheophytin a. A helical membrane pass occupies residues 153–166; the sequence is VFVSVFLIYPLGQS. His198 contacts chlorophyll a. The helical transmembrane segment at 208–228 threads the bilayer; sequence AALLCAIHGATVENTLFEDGD. Positions 215 and 262 each coordinate a plastoquinone. His215 lines the Fe cation pocket. His269 serves as a coordination point for Fe cation. Residues 279 to 295 traverse the membrane as a helical segment; sequence GLWMSAIGVVGLALNLR.

Belongs to the reaction center PufL/M/PsbA/D family. PSII is composed of 1 copy each of membrane proteins PsbA, PsbB, PsbC, PsbD, PsbE, PsbF, PsbH, PsbI, PsbJ, PsbK, PsbL, PsbM, PsbT, PsbX, PsbY, PsbZ, Psb30/Ycf12, at least 3 peripheral proteins of the oxygen-evolving complex and a large number of cofactors. It forms dimeric complexes. Requires The D1/D2 heterodimer binds P680, chlorophylls that are the primary electron donor of PSII, and subsequent electron acceptors. It shares a non-heme iron and each subunit binds pheophytin, quinone, additional chlorophylls, carotenoids and lipids. There is also a Cl(-1) ion associated with D1 and D2, which is required for oxygen evolution. The PSII complex binds additional chlorophylls, carotenoids and specific lipids. as cofactor.

Its subcellular location is the plastid. It localises to the chloroplast thylakoid membrane. It catalyses the reaction 2 a plastoquinone + 4 hnu + 2 H2O = 2 a plastoquinol + O2. In terms of biological role, photosystem II (PSII) is a light-driven water:plastoquinone oxidoreductase that uses light energy to abstract electrons from H(2)O, generating O(2) and a proton gradient subsequently used for ATP formation. It consists of a core antenna complex that captures photons, and an electron transfer chain that converts photonic excitation into a charge separation. The D1/D2 (PsbA/PsbD) reaction center heterodimer binds P680, the primary electron donor of PSII as well as several subsequent electron acceptors. D2 is needed for assembly of a stable PSII complex. In Tetradesmus obliquus (Green alga), this protein is Photosystem II D2 protein.